A 695-amino-acid chain; its full sequence is Scarecrow-like protein 31 (695 aa).

Disordered stretches follow at residues 105–136 (VISD…NSSN) and 234–260 (ISKT…RSKQ). Low complexity predominate over residues 113-136 (SSIPNNSITTSSSSNSGDYSNSSN). Positions 233-266 (AISKTRKNHHEREEEEDDLEEARRRSKQFAVNEE) form a coiled coil. The region spanning 306-693 (AKKKSRAVDF…RILFSSSCWV (388 aa)) is the GRAS domain. The interval 313–377 (VDFRTLLTLC…EGSTGTMIQS (65 aa)) is leucine repeat I (LRI). The interval 396 to 461 (YSVFLSASPF…PGLRKLRITG (66 aa)) is VHIID. Residues 427 to 431 (LHIVD) carry the VHIID motif. The segment at 477–509 (DTGRRLTEYCKRFGVPFEYNAIASKNWETIKME) is leucine repeat II (LRII). A PFYRE region spans residues 519–614 (LAVNAVLRFK…GEFYGREVMN (96 aa)). Positions 617 to 693 (ACEGVDRVER…RILFSSSCWV (77 aa)) are SAW.

The protein belongs to the GRAS family. Expressed in seedlings, roots, cotyledons, leaves and sepals.

It is found in the nucleus. Probable transcription factor involved in plant development. This chain is Scarecrow-like protein 31 (SCL31), found in Arabidopsis thaliana (Mouse-ear cress).